The following is a 352-amino-acid chain: Beta-hexosaminidase (352 aa).

Substrate is bound by residues Asp74, Arg82, Arg149, and 179–180 (KH). His192 serves as the catalytic Proton donor/acceptor. Asp263 (nucleophile) is an active-site residue.

It belongs to the glycosyl hydrolase 3 family. NagZ subfamily.

It is found in the cytoplasm. It carries out the reaction Hydrolysis of terminal non-reducing N-acetyl-D-hexosamine residues in N-acetyl-beta-D-hexosaminides.. It participates in cell wall biogenesis; peptidoglycan recycling. In terms of biological role, plays a role in peptidoglycan recycling by cleaving the terminal beta-1,4-linked N-acetylglucosamine (GlcNAc) from peptide-linked peptidoglycan fragments, giving rise to free GlcNAc, anhydro-N-acetylmuramic acid and anhydro-N-acetylmuramic acid-linked peptides. The protein is Beta-hexosaminidase of Bordetella pertussis (strain Tohama I / ATCC BAA-589 / NCTC 13251).